A 547-amino-acid polypeptide reads, in one-letter code: Chaperonin GroEL (547 aa).

Residues 30–33, K51, 87–91, G415, and D496 each bind ATP; these read TLGP and DGTTT.

The protein belongs to the chaperonin (HSP60) family. In terms of assembly, forms a cylinder of 14 subunits composed of two heptameric rings stacked back-to-back. Interacts with the co-chaperonin GroES.

The protein resides in the cytoplasm. The catalysed reaction is ATP + H2O + a folded polypeptide = ADP + phosphate + an unfolded polypeptide.. Together with its co-chaperonin GroES, plays an essential role in assisting protein folding. The GroEL-GroES system forms a nano-cage that allows encapsulation of the non-native substrate proteins and provides a physical environment optimized to promote and accelerate protein folding. The sequence is that of Chaperonin GroEL from Actinobacillus pleuropneumoniae (Haemophilus pleuropneumoniae).